Here is a 324-residue protein sequence, read N- to C-terminus: Probable cell division protein WhiA (324 aa).

Positions 276-310 (TLKELGEMMQGGKVSKSGINHRLRKIDEFADKLRN) form a DNA-binding region, H-T-H motif.

The protein belongs to the WhiA family.

Its function is as follows. Involved in cell division and chromosome segregation. The sequence is that of Probable cell division protein WhiA from Shouchella clausii (strain KSM-K16) (Alkalihalobacillus clausii).